Reading from the N-terminus, the 347-residue chain is MAELTEKDKAIQTAMGQIERQFGKGSIMKLGAREIQAVPIISTGSLALDKALGVGGFPRGRVIEIYGPESSGKTTLALHAVAEAQRQGGIAAFIDAEHALDVAYARRLGVNCDELLVSQPDTGEQALEIVDMLVRSGAVDIIIVDSVAALVPRAEIEGDMGDSHMGLQARLMSQALRKLTATIGKTHTTLIFINQIRMKIGVVYGNPETTTGGNALKFYASVRIEIRKATAIKDGENILGNRTKVKVVKNKLAPPFKSIEFDLMYGEGISKTGELLDMGVDMGIVDKSGAWYSYDGERIGQGRQNAKVFFTDNPEIFNQIQARVREALGLSSPTPKENGKEKGKAKP.

Position 67–74 (67–74 (GPESSGKT)) interacts with ATP. A disordered region spans residues 327-347 (ALGLSSPTPKENGKEKGKAKP). Over residues 337–347 (ENGKEKGKAKP) the composition is skewed to basic and acidic residues.

It belongs to the RecA family.

It localises to the cytoplasm. Can catalyze the hydrolysis of ATP in the presence of single-stranded DNA, the ATP-dependent uptake of single-stranded DNA by duplex DNA, and the ATP-dependent hybridization of homologous single-stranded DNAs. It interacts with LexA causing its activation and leading to its autocatalytic cleavage. The protein is Protein RecA of Desulforapulum autotrophicum (strain ATCC 43914 / DSM 3382 / VKM B-1955 / HRM2) (Desulfobacterium autotrophicum).